The sequence spans 258 residues: Chymotrypsin-2 (258 aa).

A signal peptide spans 1–17 (MLRKVFAVVSVLLVVSA). Positions 18–32 (AKVTKLVLDDHYVNR) are cleaved as a propeptide — activation peptide. The Peptidase S1 domain occupies 33–255 (VVGGEVAKNG…YHEWVRTTMA (223 aa)). Cysteine 59 and cysteine 75 are joined by a disulfide. Catalysis depends on charge relay system residues histidine 74 and aspartate 119. Cystine bridges form between cysteine 182/cysteine 198 and cysteine 208/cysteine 232. Catalysis depends on serine 212, which acts as the Charge relay system.

The protein belongs to the peptidase S1 family. As to expression, after blood feeding, expression is induced in the midgut epithelium, followed by secretion into the midgut lumen.

It is found in the secreted. It carries out the reaction Preferential cleavage: Tyr-|-Xaa, Trp-|-Xaa, Phe-|-Xaa, Leu-|-Xaa.. The chain is Chymotrypsin-2 (CHYM2) from Anopheles gambiae (African malaria mosquito).